The following is a 695-amino-acid chain: NADPH--cytochrome P450 reductase (695 aa).

Residues methionine 1 to aspartate 8 are Lumenal-facing. A helical membrane pass occupies residues isoleucine 9–valine 31. The Cytoplasmic segment spans residues proline 32–serine 695. The Flavodoxin-like domain maps to cysteine 66 to tryptophan 221. Residues serine 72–alanine 77, alanine 123–glycine 126, leucine 169–asparagine 178, and aspartate 204 each bind FMN. The region spanning histidine 277–proline 538 is the FAD-binding FR-type domain. An NADP(+)-binding site is contributed by arginine 296. Residues arginine 451 to serine 454, threonine 469 to valine 471, and glycine 486 to threonine 489 contribute to the FAD site. NADP(+) is bound by residues threonine 552, serine 614–arginine 615, lysine 620–glutamine 624, and glutamate 656. Residue tryptophan 694 coordinates FAD.

It belongs to the NADPH--cytochrome P450 reductase family. This sequence in the N-terminal section; belongs to the flavodoxin family. In the C-terminal section; belongs to the flavoprotein pyridine nucleotide cytochrome reductase family. FAD is required as a cofactor. It depends on FMN as a cofactor.

The protein resides in the endoplasmic reticulum membrane. It is found in the mitochondrion outer membrane. The protein localises to the cell membrane. It carries out the reaction 2 oxidized [cytochrome P450] + NADPH = 2 reduced [cytochrome P450] + NADP(+) + H(+). In terms of biological role, this enzyme is required for electron transfer from NADP to cytochrome P450 in microsomes. It can also provide electron transfer to heme oxygenase and cytochrome B5. Involved in ergosterol biosynthesis. This chain is NADPH--cytochrome P450 reductase, found in Aspergillus fumigatus (strain ATCC MYA-4609 / CBS 101355 / FGSC A1100 / Af293) (Neosartorya fumigata).